The following is a 162-amino-acid chain: Phosphopantetheine adenylyltransferase (162 aa).

Residue serine 11 participates in substrate binding. Residues serine 11–phenylalanine 12 and histidine 19 each bind ATP. Substrate contacts are provided by lysine 43, leucine 75, and arginine 89. ATP-binding positions include glycine 90–arginine 92, glutamate 100, and tyrosine 125–serine 131.

It belongs to the bacterial CoaD family. As to quaternary structure, homohexamer. Requires Mg(2+) as cofactor.

It localises to the cytoplasm. The catalysed reaction is (R)-4'-phosphopantetheine + ATP + H(+) = 3'-dephospho-CoA + diphosphate. It functions in the pathway cofactor biosynthesis; coenzyme A biosynthesis; CoA from (R)-pantothenate: step 4/5. Reversibly transfers an adenylyl group from ATP to 4'-phosphopantetheine, yielding dephospho-CoA (dPCoA) and pyrophosphate. This chain is Phosphopantetheine adenylyltransferase, found in Geotalea uraniireducens (strain Rf4) (Geobacter uraniireducens).